Here is a 421-residue protein sequence, read N- to C-terminus: F-box only protein 5 (421 aa).

Residue Ser85 is modified to Phosphoserine. The tract at residues 114–219 (ELEASRLYED…IGKKMGLEHL (106 aa)) is interaction with EVI5. The F-box domain occupies 223-273 (AELSRRGFVHLLANILTKLSGMDLVNLSKVSRIWKKILENNKGAFQLYSKT). A sufficient for interaction with RPS6KA2; Prevents association of CDC20 with RPS6KA2 region spans residues 236 to 313 (NILTKLSGMD…KSSTWAPPKK (78 aa)). Residues 236–383 (NILTKLSGMD…SCQFEYCTKC (148 aa)) form a requires for efficient binding to CDC20 region. The inhibits APC ubiquitin ligase activity stretch occupies residues 280–421 (SSKLSLHATT…KKSKKNLQRL (142 aa)). Positions 296–299 (RAAL) are competitively blocks access of APC substrates to the D-box coreceptor formed by FZR1 and ANAPC10. The segment at 348-396 (SLKACVRCNFPAKYDHYLERAVCKRESCQFEYCTKCLCAYHNNKDCLNG) adopts a ZBR-type zinc-finger fold. Cys352, Cys355, Cys370, Cys375, Cys380, Cys383, His388, and Cys393 together coordinate Zn(2+). An allows a rapid multiple mono-ubiquitination of the APC substrate, but strongly inhibits the slow ubiquitin chain elongation catalyzed by UBCH10 region spans residues 352 to 394 (CVRCNFPAKYDHYLERAVCKRESCQFEYCTKCLCAYHNNKDCL). The segment at 411–421 (TKKSKKNLQRL) is sufficient to suppress UBE2S activity; essential for interaction with UBE2S; competitively inhibits the rapide ubiquitin chain elongation by UBE2D1 which blocks UBE2D1 with APC; indispensable for recruitment and position of FBXO5 to the catalytic site of APC; abrogates the inhibition of ubiquitin chain assembly primarily catalyzed by UBE2S; inhibits the ubiquitination by either UBE2C or UBE2D1.

Part of a SCF (SKP1-cullin-F-box) protein ligase complex. Interacts with BTRC; mediates proteolysis by the SCF ubiquitin ligase complex leading to activation of APC in late mitosis and subsequent mitotic progression. Interacts with FZR1/CDH1 and the N-terminal substrate-binding domain of CDC20; prevents APC activation. Also interacts with EVI5 which blocks its phosphorylation by PLK1 and prevents its subsequent binding to BTRC and degradation. Interacts simultaneously with anaphase promoting complex (APC), through at least ANAPC2, CDC23, CDC27, the APC substrate GMNN and the APC activator FZR1. Interacts with UBE2S; interferes with the activity of UBE2S mainly by disrupting the dynamic electrostatic association between the C-terminal tail of UBE2S and ANAPC2. Interacts with RPS6KA2; cooperates to induce the metaphase arrest of early blastomeres; increases and stabilizes interaction of FBXO5 with CDC20. In terms of processing, phosphorylation by CDK2 and subsequently by PLK1 triggers degradation during early mitosis through ubiquitin-mediated proteolysis by the SCF ubiquitin ligase complex containing the F-box protein BTRC. This degradation is necessary for the activation of APC in late mitosis and subsequent mitotic progression. Phosphorylated by RPS6KA2; increases and stabilizes interaction with CDC20. Post-translationally, ubiquitinated by the SCF(BTRC) complex following phosphorylation by PLK1. Undergoes both 'Lys-11' and 'Lys-48'-linked polyubiquitination by APC-FZR1 complex leading to degradation during G1 phase by the proteasome. Degraded through the SCF(BTRC) complex; degradation occurs during oocyte maturation, between germinal vesicle breakdown (GVBD) and meiosis I, and is required for the meiosis I-meiosis II transition. As to expression, expressed in oocytes and granulosa cells. Expressed in proliferating cells compartments in hair follicle and skin epidermis, spermatogonia, and intestinal crypts.

The protein resides in the nucleus. It is found in the cytoplasm. Its subcellular location is the cytoskeleton. It localises to the spindle. The protein operates within protein modification; protein ubiquitination. Its function is as follows. Regulator of APC activity during mitotic and meiotic cell cycle. During mitotic cell cycle plays a role as both substrate and inhibitor of APC-FZR1 complex. During G1 phase, plays a role as substrate of APC-FZR1 complex E3 ligase. Then switches as an inhibitor of APC-FZR1 complex during S and G2 leading to cell-cycle commitment. As APC inhibitor, prevents the degradation of APC substrates at multiple levels: by interacting with APC and blocking access of APC substrates to the D-box co-receptor, formed by FZR1 and ANAPC10; by suppressing ubiquitin ligation and chain elongation by APC by preventing the UBE2C and UBE2S activities. Plays a role in genome integrity preservation by coordinating DNA replication with mitosis through APC inhibition in interphase to stabilize CCNA2 and GMNN in order to promote mitosis and prevent rereplication and DNA damage-induced cellular senescence. During oocyte maturation, plays a role in meiosis through inactivation of APC-FZR1 complex. Inhibits APC through RPS6KA2 interaction that increases FBXO5 affiniy for CDC20 leading to the metaphase arrest of the second meiotic division before fertilization. Controls entry into the first meiotic division through inactivation of APC-FZR1 complex. Promotes migration and osteogenic differentiation of mesenchymal stem cells. The polypeptide is F-box only protein 5 (Mus musculus (Mouse)).